The primary structure comprises 337 residues: Phenylalanine--tRNA ligase alpha subunit (337 aa).

Glu258 contributes to the Mg(2+) binding site.

Belongs to the class-II aminoacyl-tRNA synthetase family. Phe-tRNA synthetase alpha subunit type 1 subfamily. Tetramer of two alpha and two beta subunits. Requires Mg(2+) as cofactor.

It is found in the cytoplasm. The enzyme catalyses tRNA(Phe) + L-phenylalanine + ATP = L-phenylalanyl-tRNA(Phe) + AMP + diphosphate + H(+). This is Phenylalanine--tRNA ligase alpha subunit from Burkholderia vietnamiensis (strain G4 / LMG 22486) (Burkholderia cepacia (strain R1808)).